The chain runs to 187 residues: CRISPR system Cmr subunit Cmr1-2 (187 aa).

This sequence belongs to the CRISPR system Cmr1 family. In terms of assembly, part of the type III-B Cmr ribonucleoprotein (RNP) complex. This is an elongated RNP with Cmr2 and Cmr3 as the base, with Cmr4 and Cmr5 forming a helical core along the mature crRNA (39 or 45 nt in length), while the complex is capped by Cmr6 and Cmr1. The 5' end of the crRNA is bound to Cmr2 and Cmr3, while Cmr6 and a Cmr1 subunit (Cmr1-1 or Cmr1-2) cap the 3' end of the crRNA. The target RNA lies antiparallel to the crRNA, with its 5' end near Cmr1 and Cmr6 and its 3' end near Cmr2 and Cmr3; major target cleavage occurs nears the junction of Cmr1/Cmr6 and Cmr4/Cmr, with minor cleavage occurring at 6 nt intervals which coincide with the proposed spacing of Cmr4 subunits.

Its subcellular location is the cytoplasm. In terms of biological role, CRISPR (clustered regularly interspaced short palindromic repeat), is an adaptive immune system that provides protection against mobile genetic elements (viruses, transposable elements and conjugative plasmids). CRISPR clusters contain sequences complementary to antecedent mobile elements and target invading nucleic acids. CRISPR clusters are transcribed and processed into CRISPR RNA (crRNA), formerly called psiRNA (prokaryotic silencing) in this organism. Part of the Cmr ribonucleoprotein complex which has divalent cation-dependent endoribonuclease activity specific for ssRNA complementary to the crRNA (target RNA), generating 5' hydroxy- and 3' phosphate or 2'-3' cyclic phosphate termini. Cmr4 is probably the subunit that cleaves target RNA. Cmr complex does not cleave ssDNA complementary to the crRNA. Cleavage of invading RNA is guided by the crRNA; substrate cleavage occurs a fixed distance (14 nt) from the 3' end of the crRNA. In vitro reconstitution shows Cmr1-2 and Cmr5 are not absolutely necessary for target cleavage. The polypeptide is CRISPR system Cmr subunit Cmr1-2 (Pyrococcus furiosus (strain ATCC 43587 / DSM 3638 / JCM 8422 / Vc1)).